The primary structure comprises 357 residues: Putative ankyrin repeat protein L42 (357 aa).

9 ANK repeats span residues 34-63 (SCKQFIGLVCILTNNLNLLNLLVKKGNLKF), 86-115 (EQNECLKMSCIHGCLEILKYLISIGVDFRM), 116-145 (NDDEPLMLAIENGHLKIVQFLYSKRVNIRA), 147-175 (NNRPLVLSCEKGYINIVNFLLDKKASFVS), 176-205 (KQNEVFSTACGFGQMDIVKLLVEKGADINV), 206-235 (GKIPPIRAAAAGGHLNVIEHLVNKGASINK), 237-265 (SVDSLFSAAFYGHLNIVKYLLGYISEVNI), 267-294 (YYAFEKACINGHIDIVQYLFSENIITKD), and 301-331 (NTRYLFYHTIRNKHKHIIKFLIENNIFDKDK).

The sequence is that of Putative ankyrin repeat protein L42 from Acanthamoeba polyphaga (Amoeba).